The chain runs to 243 residues: Small ribosomal subunit protein uS3 (243 aa).

The region spanning 39 to 110 (IRVFIQKKYG…QVRINVVEIE (72 aa)) is the KH type-2 domain. The interval 216–243 (QPLPVGASPRRKGNRRPQQFEDRSNDGK) is disordered. A compositionally biased stretch (basic and acidic residues) spans 233 to 243 (QQFEDRSNDGK).

The protein belongs to the universal ribosomal protein uS3 family. In terms of assembly, part of the 30S ribosomal subunit. Forms a tight complex with proteins S10 and S14.

Binds the lower part of the 30S subunit head. Binds mRNA in the 70S ribosome, positioning it for translation. The polypeptide is Small ribosomal subunit protein uS3 (Prochlorococcus marinus (strain SARG / CCMP1375 / SS120)).